We begin with the raw amino-acid sequence, 304 residues long: Quinolinate synthase (304 aa).

His23 and Ser40 together coordinate iminosuccinate. Cys85 lines the [4Fe-4S] cluster pocket. Iminosuccinate is bound by residues 111-113 and Ser128; that span reads YVN. Residue Cys171 coordinates [4Fe-4S] cluster. Iminosuccinate contacts are provided by residues 197 to 199 and Thr214; that span reads HPE. Cys259 lines the [4Fe-4S] cluster pocket.

This sequence belongs to the quinolinate synthase family. Type 2 subfamily. [4Fe-4S] cluster is required as a cofactor.

It localises to the cytoplasm. The enzyme catalyses iminosuccinate + dihydroxyacetone phosphate = quinolinate + phosphate + 2 H2O + H(+). It participates in cofactor biosynthesis; NAD(+) biosynthesis; quinolinate from iminoaspartate: step 1/1. In terms of biological role, catalyzes the condensation of iminoaspartate with dihydroxyacetone phosphate to form quinolinate. This is Quinolinate synthase from Pelobacter propionicus (strain DSM 2379 / NBRC 103807 / OttBd1).